Consider the following 435-residue polypeptide: Protein GOLM2 (435 aa).

Met1 is subject to N-acetylmethionine. Over 1–14 (MVGFGANRRAGRLP) the chain is Cytoplasmic. Residues 15–35 (SFVLVVLLVVIVVLAFNYWSI) form a helical; Signal-anchor for type II membrane protein membrane-spanning segment. Residues 35 to 194 (ISSRHVLLQE…DQFLQEQKET (160 aa)) are a coiled coil. At 36–435 (SSRHVLLQEE…YGKQRFSDVL (400 aa)) the chain is on the lumenal side. 2 stretches are compositionally biased toward basic and acidic residues: residues 191–212 (QKET…DHGA) and 223–239 (DANK…PHGK). Disordered stretches follow at residues 191–239 (QKET…PHGK) and 271–435 (PPVL…SDVL). Phosphoserine is present on Ser232. Polar residues-rich tracts occupy residues 282 to 294 (QTIS…QPLS) and 302 to 320 (HLNQ…SNPL). Positions 343–361 (ATRDRANDFHKLKQSRFFD) are enriched in basic and acidic residues. Ser365 carries the post-translational modification Phosphoserine. The span at 398–417 (YNEEEDGDGGEEDVQDDEER) shows a compositional bias: acidic residues. The span at 425 to 435 (DYGKQRFSDVL) shows a compositional bias: basic and acidic residues.

It belongs to the GOLM family.

It localises to the membrane. The sequence is that of Protein GOLM2 from Mus musculus (Mouse).